We begin with the raw amino-acid sequence, 275 residues long: Large ribosomal subunit protein uL2 (275 aa).

Disordered stretches follow at residues 28–59 (KPFA…GGHK) and 224–275 (AMNP…RHKR). The segment covering 35 to 49 (DSQSTTAGRNNNGHI) has biased composition (polar residues). Residues 50–59 (TTRHKGGGHK) are compositionally biased toward basic residues.

The protein belongs to the universal ribosomal protein uL2 family. In terms of assembly, part of the 50S ribosomal subunit. Forms a bridge to the 30S subunit in the 70S ribosome.

One of the primary rRNA binding proteins. Required for association of the 30S and 50S subunits to form the 70S ribosome, for tRNA binding and peptide bond formation. It has been suggested to have peptidyltransferase activity; this is somewhat controversial. Makes several contacts with the 16S rRNA in the 70S ribosome. This Paraburkholderia xenovorans (strain LB400) protein is Large ribosomal subunit protein uL2.